The following is a 309-amino-acid chain: NADH-cytochrome b5 reductase 1 (309 aa).

A helical membrane pass occupies residues 31-51 (DWVVYSVALALALGTWKFFQL). One can recognise an FAD-binding FR-type domain in the interval 60–168 (TKFQEFELKE…RGPKGAFVYQ (109 aa)). FAD is bound by residues 148–163 (AGLS…GPKG) and 174–208 (HFGM…QVDL).

This sequence belongs to the flavoprotein pyridine nucleotide cytochrome reductase family. In terms of assembly, monomer. Component of the 2-(3-amino-3-carboxypropyl)histidine synthase complex composed of DPH1, DPH2, DPH3 and a NADH-dependent reductase, predominantly CBR1. The cofactor is FAD.

The protein resides in the mitochondrion outer membrane. The enzyme catalyses 2 Fe(III)-[cytochrome b5] + NADH = 2 Fe(II)-[cytochrome b5] + NAD(+) + H(+). It carries out the reaction 2 Fe(3+)-[Dph3] + NADH = 2 Fe(2+)-[Dph3] + NAD(+) + H(+). The protein operates within protein modification; peptidyl-diphthamide biosynthesis. Its function is as follows. NADH-dependent reductase for DPH3 and cytochrome b5. Required for the first step of diphthamide biosynthesis, a post-translational modification of histidine which occurs in elongation factor 2. DPH1 and DPH2 transfer a 3-amino-3-carboxypropyl (ACP) group from S-adenosyl-L-methionine (SAM) to a histidine residue, the reaction is assisted by a reduction system comprising DPH3 and a NADH-dependent reductase, predominantly CBR1. By reducing DPH3, also involved in the formation of the tRNA wobble base modification mcm5s 2U (5-methoxycarbonylmethyl-2-thiouridine), mediated by the elongator complex. The cytochrome b5/NADH cytochrome b5 reductase electron transfer system supports the catalytic activity of several sterol biosynthetic enzymes. The chain is NADH-cytochrome b5 reductase 1 (CBR1) from Pyricularia oryzae (strain 70-15 / ATCC MYA-4617 / FGSC 8958) (Rice blast fungus).